We begin with the raw amino-acid sequence, 180 residues long: Adenine phosphoribosyltransferase (180 aa).

An N-acetylalanine modification is found at Ala2. Residues Ser4, Ser15, and Ser30 each carry the phosphoserine modification. A Phosphotyrosine modification is found at Tyr60. Ser66 is subject to Phosphoserine. Lys114 bears the N6-acetyllysine mark. Phosphothreonine is present on Thr135.

This sequence belongs to the purine/pyrimidine phosphoribosyltransferase family. In terms of assembly, homodimer.

It localises to the cytoplasm. The enzyme catalyses AMP + diphosphate = 5-phospho-alpha-D-ribose 1-diphosphate + adenine. The protein operates within purine metabolism; AMP biosynthesis via salvage pathway; AMP from adenine: step 1/1. In terms of biological role, catalyzes a salvage reaction resulting in the formation of AMP, that is energically less costly than de novo synthesis. This Homo sapiens (Human) protein is Adenine phosphoribosyltransferase.